Consider the following 230-residue polypeptide: Orotidine 5'-phosphate decarboxylase (230 aa).

Substrate is bound by residues D10, K32, 59 to 68 (DLKYHDIPNT), T119, R180, Q189, G209, and R210. K61 serves as the catalytic Proton donor.

The protein belongs to the OMP decarboxylase family. Type 1 subfamily. In terms of assembly, homodimer.

The enzyme catalyses orotidine 5'-phosphate + H(+) = UMP + CO2. The protein operates within pyrimidine metabolism; UMP biosynthesis via de novo pathway; UMP from orotate: step 2/2. In terms of biological role, catalyzes the decarboxylation of orotidine 5'-monophosphate (OMP) to uridine 5'-monophosphate (UMP). In Haemophilus influenzae (strain 86-028NP), this protein is Orotidine 5'-phosphate decarboxylase.